The sequence spans 551 residues: Adenylyl cyclase-associated protein (551 aa).

The disordered stretch occupies residues 34–55 (SGHKPLPNMHRPSRDSNSQTHN). A Phosphoserine modification is found at S92. The residue at position 96 (T96) is a Phosphothreonine. Positions 288 to 300 (SASKTQAPSSGDS) are enriched in polar residues. Disordered stretches follow at residues 288-333 (SASK…NKGD) and 348-395 (TSGL…PVKP). The segment covering 305 to 315 (LPPPPPPPPPS) has biased composition (pro residues). The segment covering 352–361 (RKVDKSEMTH) has biased composition (basic and acidic residues). Residues 395–529 (PPRIELENTK…EEGDYAERAV (135 aa)) form the C-CAP/cofactor C-like domain.

Belongs to the CAP family.

In terms of biological role, the N-terminal domain binds to adenylyl cyclase, thereby enabling adenylyl cyclase to be activated by upstream regulatory signals, such as Ras. The C-terminal domain is required for normal cellular morphology and growth control. The polypeptide is Adenylyl cyclase-associated protein (cap1) (Schizosaccharomyces pombe (strain 972 / ATCC 24843) (Fission yeast)).